The chain runs to 614 residues: Phragmoplastin DRP1C (614 aa).

The Dynamin-type G domain occupies 32–301 (WEALPTVAVV…LETVIRQKIP (270 aa)). Residues 42–49 (GGQSSGKS) form a G1 motif region. 45-50 (SSGKSS) is a binding site for GTP. Residues 68 to 70 (VTR) are G2 motif. The tract at residues 143–146 (DLPG) is G3 motif. A G4 motif region spans residues 212 to 215 (TKLD). Residues 213–218 (KLDIMD) and 243–246 (NRSQ) each bind GTP. Residues 242–245 (VNRS) form a G5 motif region. The interval 499–519 (EPEKEKPNPRNAPAPNADPYS) is disordered. Positions 507–517 (PRNAPAPNADP) are enriched in low complexity. In terms of domain architecture, GED spans 523-614 (FRKIGSNVSA…RDDIDAVAWK (92 aa)).

The protein belongs to the TRAFAC class dynamin-like GTPase superfamily. Dynamin/Fzo/YdjA family. Forms homodimer and may homooligomerize and heterooligomerize to form the phragmoplastin complex. Binds to PHIP1. Ubiquitous.

The protein resides in the cytoplasm. The protein localises to the cytoskeleton. It localises to the cell cortex. Its subcellular location is the cytoplasmic vesicle. It is found in the clathrin-coated vesicle. The protein resides in the phragmoplast. It carries out the reaction GTP + H2O = GDP + phosphate + H(+). Functionally, microtubule-associated force-producing protein that is targeted to the growing edges of the cell plate during cytokinesis. Also plays a major role in plasma membrane maintenance during pollen maturation. Has a GTPase activity. The protein is Phragmoplastin DRP1C of Arabidopsis thaliana (Mouse-ear cress).